We begin with the raw amino-acid sequence, 410 residues long: Phospho-N-acetylmuramoyl-pentapeptide-transferase (410 aa).

The next 10 membrane-spanning stretches (helical) occupy residues 23-43 (YITF…TIYG), 73-93 (TPTM…FLFA), 96-116 (HNIY…IGFV), 132-152 (GIFK…VLYF), 215-235 (WAWL…SNGA), 248-268 (TSAV…NIIF), 285-305 (VFIS…SFPA), 307-327 (VFMG…LAIA), 332-352 (ILIV…IIQV), and 387-407 (KIVT…IVTL).

Belongs to the glycosyltransferase 4 family. MraY subfamily. It depends on Mg(2+) as a cofactor.

Its subcellular location is the cell inner membrane. The enzyme catalyses UDP-N-acetyl-alpha-D-muramoyl-L-alanyl-gamma-D-glutamyl-meso-2,6-diaminopimeloyl-D-alanyl-D-alanine + di-trans,octa-cis-undecaprenyl phosphate = di-trans,octa-cis-undecaprenyl diphospho-N-acetyl-alpha-D-muramoyl-L-alanyl-D-glutamyl-meso-2,6-diaminopimeloyl-D-alanyl-D-alanine + UMP. It functions in the pathway cell wall biogenesis; peptidoglycan biosynthesis. Its function is as follows. Catalyzes the initial step of the lipid cycle reactions in the biosynthesis of the cell wall peptidoglycan: transfers peptidoglycan precursor phospho-MurNAc-pentapeptide from UDP-MurNAc-pentapeptide onto the lipid carrier undecaprenyl phosphate, yielding undecaprenyl-pyrophosphoryl-MurNAc-pentapeptide, known as lipid I. The protein is Phospho-N-acetylmuramoyl-pentapeptide-transferase of Flavobacterium johnsoniae (strain ATCC 17061 / DSM 2064 / JCM 8514 / BCRC 14874 / CCUG 350202 / NBRC 14942 / NCIMB 11054 / UW101) (Cytophaga johnsonae).